Consider the following 134-residue polypeptide: Large ribosomal subunit protein bL20 (134 aa).

The protein belongs to the bacterial ribosomal protein bL20 family.

In terms of biological role, binds directly to 23S ribosomal RNA and is necessary for the in vitro assembly process of the 50S ribosomal subunit. It is not involved in the protein synthesizing functions of that subunit. The protein is Large ribosomal subunit protein bL20 of Brucella abortus (strain S19).